We begin with the raw amino-acid sequence, 86 residues long: Small ribosomal subunit protein uS17 (86 aa).

Belongs to the universal ribosomal protein uS17 family. Part of the 30S ribosomal subunit.

One of the primary rRNA binding proteins, it binds specifically to the 5'-end of 16S ribosomal RNA. The chain is Small ribosomal subunit protein uS17 from Halalkalibacterium halodurans (strain ATCC BAA-125 / DSM 18197 / FERM 7344 / JCM 9153 / C-125) (Bacillus halodurans).